The following is a 280-amino-acid chain: Acyl-[acyl-carrier-protein]--UDP-N-acetylglucosamine O-acyltransferase (280 aa).

The protein belongs to the transferase hexapeptide repeat family. LpxA subfamily. In terms of assembly, homotrimer.

Its subcellular location is the cytoplasm. It carries out the reaction a (3R)-hydroxyacyl-[ACP] + UDP-N-acetyl-alpha-D-glucosamine = a UDP-3-O-[(3R)-3-hydroxyacyl]-N-acetyl-alpha-D-glucosamine + holo-[ACP]. It functions in the pathway glycolipid biosynthesis; lipid IV(A) biosynthesis; lipid IV(A) from (3R)-3-hydroxytetradecanoyl-[acyl-carrier-protein] and UDP-N-acetyl-alpha-D-glucosamine: step 1/6. Its function is as follows. Involved in the biosynthesis of lipid A, a phosphorylated glycolipid that anchors the lipopolysaccharide to the outer membrane of the cell. The sequence is that of Acyl-[acyl-carrier-protein]--UDP-N-acetylglucosamine O-acyltransferase from Chlamydia trachomatis serovar A (strain ATCC VR-571B / DSM 19440 / HAR-13).